A 480-amino-acid chain; its full sequence is MGYSFDRASKDVVKKLQGRDLRPVECLSDATKFRLFHILQETPRSGWETEDIPVGFTLLDLLEPNFPVPEPEVSAPKPFIHVQSTDLEANLNVADIARGGVGYVGYGGYNIEVQSTSIPNPKLEILQNRKLLDNLPTFMKFCRMERKNLYVVTEAYEVSKDTMLTGLSSVNLSVKGFFKQLFKVRGKAGRSEKYSIPIPKGSVLAYKKQQLVIENNTCVILPSATKKKMTFPGTPKYASASEPTEIYRTELQGLWINDIVPIGRIQEPAHLDFMCLQNEVYKQTEQLAELSKGVQEVVLSSILSMLYEGDRKVLYDLMNMLELNQLGHMDGPGGKILDELRKDSSNPCVDLKDLILYLLQALMVLSDSQLNLLAQSVEMGILPHQVELVKSILQPNFKYPWNIPFTLQPQLLAPLQGEGLAITYELLEECGLKMELNNPRSTWDLEAKMPLSALYGSLSFLQQLRKANSSSKPSLRPGYI.

Residues methionine 1 to lysine 226 are triggers pyroptosis.

This sequence belongs to the gasdermin family. In terms of assembly, homooligomer; homooligomeric ring-shaped pore complex containing 27-28 subunits when inserted in the membrane. In terms of processing, cleavage by CASP8 relieves autoinhibition by releasing the N-terminal moiety (Gasdermin-C2, N-terminal) that initiates pyroptosis. Palmitoylated.

Its subcellular location is the cytoplasm. The protein resides in the cytosol. It localises to the cell membrane. Its activity is regulated as follows. The full-length protein before cleavage is inactive: intramolecular interactions between N- and C-terminal domains mediate autoinhibition in the absence of activation signal. The intrinsic pyroptosis-inducing activity is carried by the released N-terminal moiety (Gasdermin-C2, N-terminal) following cleavage by caspase CASP8 in response to type-2 immunity following worm infection. This form constitutes the precursor of the pore-forming protein: upon cleavage, the released N-terminal moiety (Gasdermin-C2, N-terminal) binds to membranes and forms pores, triggering pyroptosis. In terms of biological role, pore-forming protein that causes membrane permeabilization and pyroptosis in response to type-2 immunity. Produced by the cleavage of gasdermin-C2 in response to type-2 immunity following worm infection. After cleavage, moves to the plasma membrane where it strongly binds to membrane inner leaflet lipids. Homooligomerizes within the membrane and forms pores of 10-15 nanometers (nm) of inner diameter, triggering pyroptosis and lytic cell death in enterocytes. In Mus musculus (Mouse), this protein is Gasdermin-C2.